Consider the following 76-residue polypeptide: uncharacterized protein (76 aa).

This is an uncharacterized protein from Archaeoglobus fulgidus (strain ATCC 49558 / DSM 4304 / JCM 9628 / NBRC 100126 / VC-16).